The following is a 4561-amino-acid chain: StAR-related lipid transfer protein 9 (4561 aa).

One can recognise a Kinesin motor domain in the interval 3–384; that stretch reads NVQVAVRVRP…MRYASNAKNI (382 aa). 103–110 contributes to the ATP binding site; the sequence is GQTGSGKT. Positions 307–321 are enriched in low complexity; that stretch reads SSGGDSGVPSTTSGA. The interval 307 to 330 is disordered; the sequence is SSGGDSGVPSTTSGASSGGGPARR. Residues 482–533 enclose the FHA domain; sequence TKIGRIDSDQEQDIVLQGQWIERDHCTITSTCGVVILRPTQGARCTVNGREV. Disordered regions lie at residues 784-805, 873-1064, and 1092-1153; these read SRAP…RRSR, SRWR…DTES, and WNLP…PSDS. Composition is skewed to polar residues over residues 789 to 805, 884 to 903, 911 to 920, and 939 to 948; these read WASS…RRSR, ASTQ…SQEI, CQMSSQGQST, and RWASVNTKTG. Composition is skewed to basic and acidic residues over residues 1046–1060 and 1124–1135; these read RPIK…RDLS and SRGEYSMKDHGH. At Ser-1164 the chain carries Phosphoserine. 16 disordered regions span residues 1288-1392, 1700-1767, 1959-1980, 2077-2120, 2320-2356, 2384-2427, 2439-2467, 2622-2656, 2712-2735, 2777-2800, 3002-3067, 3185-3207, 3246-3286, 3645-3703, 3790-3847, and 3863-3913; these read PSGD…SDMS, REAW…EEEN, ECKA…EEKQ, TNAT…ADRL, LATG…LGGS, VSTS…SSLD, FLLQ…LPNS, KPRQ…DPLP, KDSI…SEKI, TGLE…GNVG, RSVE…PGTL, AQTE…REQL, ELNL…TSLK, EGAA…LRPE, SDLA…PQQS, and QPKT…GRTT. Basic and acidic residues predominate over residues 1300 to 1321; it reads DIHEIQPHDEKPKHWLSIEEPK. 2 stretches are compositionally biased toward polar residues: residues 1328–1360 and 1722–1741; these read LPQS…SQGL and PKLS…TTTK. Composition is skewed to basic and acidic residues over residues 1754–1767 and 1970–1980; these read ELGK…EEEN and QSKEEPLEEKQ. Positions 2077 to 2091 are enriched in polar residues; that stretch reads TNATSNNNTQIQKLT. Positions 2096-2110 are enriched in basic and acidic residues; it reads RSREYVQTRESESEH. 2 stretches are compositionally biased toward polar residues: residues 2333-2351 and 2399-2408; these read TRSS…TTHT and TSTGSTTQEA. The stretch at 2414 to 2463 forms a coiled coil; sequence EATVQKERKNSSLDRISRQAEKRVSFLLQEDSNQGEEERQKAEETSEDQQ. Positions 2417–2427 are enriched in basic and acidic residues; the sequence is VQKERKNSSLD. Residues 2634–2647 are compositionally biased toward basic and acidic residues; it reads DSSEVIEKRKEASR. 2 stretches are compositionally biased toward polar residues: residues 3039 to 3054 and 3187 to 3199; these read LKNN…SQTM and TEPS…THSQ. A compositionally biased stretch (pro residues) spans 3689-3700; it reads PASPDGSPPPSL. Positions 3812 to 3835 are enriched in basic and acidic residues; it reads DSQRAESLDREGKSPLGKSSERLL. The span at 3863–3874 shows a compositional bias: polar residues; the sequence is QPKTTTGDQSKL. Positions 4185 to 4224 form a coiled coil; sequence SDIELMLQEYRRAREEAKVEIAQARDRLKERTEQEKMRIR. Residues 4344-4561 enclose the START domain; the sequence is PYQDLAKHIV…VAKLASFLRS (218 aa).

It belongs to the TRAFAC class myosin-kinesin ATPase superfamily. Kinesin family. In terms of assembly, interacts with ATAD3A.

It localises to the cytoplasm. The protein localises to the cytoskeleton. It is found in the microtubule organizing center. The protein resides in the centrosome. Its subcellular location is the centriole. It localises to the nucleus. Its function is as follows. Microtubule-dependent motor protein required for spindle pole assembly during mitosis. Required to stabilize the pericentriolar material (PCM). In Mus musculus (Mouse), this protein is StAR-related lipid transfer protein 9 (Stard9).